Consider the following 331-residue polypeptide: Beta-ketoacyl-[acyl-carrier-protein] synthase III (331 aa).

Residues C113 and H253 contribute to the active site. The tract at residues Q254–R258 is ACP-binding. N283 is a catalytic residue.

This sequence belongs to the thiolase-like superfamily. FabH family. Homodimer.

Its subcellular location is the cytoplasm. The enzyme catalyses malonyl-[ACP] + acetyl-CoA + H(+) = 3-oxobutanoyl-[ACP] + CO2 + CoA. The protein operates within lipid metabolism; fatty acid biosynthesis. In terms of biological role, catalyzes the condensation reaction of fatty acid synthesis by the addition to an acyl acceptor of two carbons from malonyl-ACP. Catalyzes the first condensation reaction which initiates fatty acid synthesis and may therefore play a role in governing the total rate of fatty acid production. Possesses both acetoacetyl-ACP synthase and acetyl transacylase activities. Its substrate specificity determines the biosynthesis of branched-chain and/or straight-chain of fatty acids. The sequence is that of Beta-ketoacyl-[acyl-carrier-protein] synthase III from Desulfitobacterium hafniense (strain Y51).